We begin with the raw amino-acid sequence, 218 residues long: Ras-related protein RABA1h (218 aa).

GTP is bound at residue 20–27 (GDSGVGKS). An Effector region motif is present at residues 42-50 (SRSTIGVEF). Residues 68–72 (DTAGQ), 126–129 (NKAD), and 156–157 (SA) each bind GTP. S-geranylgeranyl cysteine attachment occurs at residues cysteine 215 and cysteine 216.

It belongs to the small GTPase superfamily. Rab family.

Its subcellular location is the cell membrane. In terms of biological role, intracellular vesicle trafficking and protein transport. The protein is Ras-related protein RABA1h (RABA1H) of Arabidopsis thaliana (Mouse-ear cress).